Reading from the N-terminus, the 273-residue chain is Putative pyruvate, phosphate dikinase regulatory protein 2 (273 aa).

151–158 (GVSRTSKT) contributes to the ADP binding site.

This sequence belongs to the pyruvate, phosphate/water dikinase regulatory protein family. PDRP subfamily.

The enzyme catalyses N(tele)-phospho-L-histidyl/L-threonyl-[pyruvate, phosphate dikinase] + ADP = N(tele)-phospho-L-histidyl/O-phospho-L-threonyl-[pyruvate, phosphate dikinase] + AMP + H(+). The catalysed reaction is N(tele)-phospho-L-histidyl/O-phospho-L-threonyl-[pyruvate, phosphate dikinase] + phosphate + H(+) = N(tele)-phospho-L-histidyl/L-threonyl-[pyruvate, phosphate dikinase] + diphosphate. Bifunctional serine/threonine kinase and phosphorylase involved in the regulation of the pyruvate, phosphate dikinase (PPDK) by catalyzing its phosphorylation/dephosphorylation. This chain is Putative pyruvate, phosphate dikinase regulatory protein 2, found in Syntrophomonas wolfei subsp. wolfei (strain DSM 2245B / Goettingen).